Consider the following 267-residue polypeptide: Glutamate racemase (267 aa).

Residues 13 to 14 (DS) and 45 to 46 (YG) each bind substrate. Cysteine 77 acts as the Proton donor/acceptor in catalysis. 78–79 (NT) contacts substrate. The active-site Proton donor/acceptor is cysteine 192. Substrate is bound at residue 193 to 194 (TH).

Belongs to the aspartate/glutamate racemases family.

It catalyses the reaction L-glutamate = D-glutamate. It participates in cell wall biogenesis; peptidoglycan biosynthesis. Provides the (R)-glutamate required for cell wall biosynthesis. The polypeptide is Glutamate racemase (Sinorhizobium fredii (strain NBRC 101917 / NGR234)).